A 484-amino-acid chain; its full sequence is Poly(A) RNA polymerase GLD2 (484 aa).

A phosphoserine mark is found at S62 and S69. A Nuclear localization signal motif is present at residues K76–R92. At S95 the chain carries Phosphoserine. D213 and D215 together coordinate Mg(2+). One can recognise a PAP-associated domain in the interval S386–N440.

The protein belongs to the DNA polymerase type-B-like family. GLD2 subfamily. As to quaternary structure, interacts with CPEB1, CPEB2, CPSF1 and PABPC1. Interacts with QKI isoform QKI7; promoting recruitment to miRNA miR-122 and miR-122 stabilization. Requires Mg(2+) as cofactor. It depends on Mn(2+) as a cofactor. In terms of tissue distribution, ubiquitous. In brain, it is highly expressed in the cerebral cortex, cerebellum, hippocampus and olfactory bulb.

It localises to the cytoplasm. It is found in the nucleus. The enzyme catalyses RNA(n) + ATP = RNA(n)-3'-adenine ribonucleotide + diphosphate. In terms of biological role, cytoplasmic poly(A) RNA polymerase that adds successive AMP monomers to the 3'-end of specific RNAs, forming a poly(A) tail. In contrast to the canonical nuclear poly(A) RNA polymerase, it only adds poly(A) to selected cytoplasmic mRNAs. Does not play a role in replication-dependent histone mRNA degradation. Adds a single nucleotide to the 3' end of specific miRNAs, monoadenylation stabilizes and prolongs the activity of some but not all miRNAs. The polypeptide is Poly(A) RNA polymerase GLD2 (Tent2) (Mus musculus (Mouse)).